Consider the following 204-residue polypeptide: dTTP/UTP pyrophosphatase (204 aa).

The active-site Proton acceptor is D68.

It belongs to the Maf family. YhdE subfamily. It depends on a divalent metal cation as a cofactor.

It localises to the cytoplasm. The enzyme catalyses dTTP + H2O = dTMP + diphosphate + H(+). It catalyses the reaction UTP + H2O = UMP + diphosphate + H(+). Functionally, nucleoside triphosphate pyrophosphatase that hydrolyzes dTTP and UTP. May have a dual role in cell division arrest and in preventing the incorporation of modified nucleotides into cellular nucleic acids. The protein is dTTP/UTP pyrophosphatase of Thermotoga petrophila (strain ATCC BAA-488 / DSM 13995 / JCM 10881 / RKU-1).